The chain runs to 260 residues: Adenosine 5'-phosphosulfate reductase (260 aa).

[4Fe-4S] cluster is bound by residues cysteine 130, cysteine 131, cysteine 213, and cysteine 216. The active-site Nucleophile; cysteine thiosulfonate intermediate is cysteine 241.

The protein belongs to the PAPS reductase family. CysH subfamily. Requires [4Fe-4S] cluster as cofactor.

The protein localises to the cytoplasm. The catalysed reaction is [thioredoxin]-disulfide + sulfite + AMP + 2 H(+) = adenosine 5'-phosphosulfate + [thioredoxin]-dithiol. Its pathway is sulfur metabolism; hydrogen sulfide biosynthesis; sulfite from sulfate. Its function is as follows. Catalyzes the formation of sulfite from adenosine 5'-phosphosulfate (APS) using thioredoxin as an electron donor. The polypeptide is Adenosine 5'-phosphosulfate reductase (Agrobacterium fabrum (strain C58 / ATCC 33970) (Agrobacterium tumefaciens (strain C58))).